Consider the following 349-residue polypeptide: DNA replication and repair protein RecF (349 aa).

30–37 (GKNGSGKT) contacts ATP.

Belongs to the RecF family.

It is found in the cytoplasm. Functionally, the RecF protein is involved in DNA metabolism; it is required for DNA replication and normal SOS inducibility. RecF binds preferentially to single-stranded, linear DNA. It also seems to bind ATP. The polypeptide is DNA replication and repair protein RecF (Francisella tularensis subsp. mediasiatica (strain FSC147)).